We begin with the raw amino-acid sequence, 428 residues long: MNYLFKNGRYMNEEGKIVATDLLVQDGKIAKVAENITADNAEVIDVNGKLIAPGLVDVHVHLREPGGEHKETIETGTLAAAKGGFTTICAMPNTRPVPDCREHMEDLQKRIEEKAHVNVLPYGAITVRQAGSEMTDFETLKELGAFAFTDDGVGVQDASMMLAAMKRAAKLDMAVVAHCEENTLINKGCVHEGKFSEKHGLNGIPSVCESVHIARDILLAEAADCHYHVCHVSTKGSVRVIRDAKRAGIKVTAEVTPHHLVLCEDDIPSADPNFKMNPPLRGKEDHAALIEGLLDGTIDMIATDHAPHTAEEKAQGIERAPFGITGFETAFPLLYTNLVKKGVITLEQLIQFLTEKPADTFGLEAGRLKEGRAADITIIDLEQEEEIDPTTFLSKGKNTPFAGWKCQGWPVMTIVGGKIAWQKESALV.

Residues histidine 59 and histidine 61 each coordinate Zn(2+). Residues 61 to 63 (HLR) and asparagine 93 each bind substrate. The Zn(2+) site is built by aspartate 151, histidine 178, and histidine 231. Asparagine 277 contacts substrate. A Zn(2+)-binding site is contributed by aspartate 304. Residue aspartate 304 is part of the active site. Substrate contacts are provided by residues histidine 308 and 322-323 (FG).

It belongs to the metallo-dependent hydrolases superfamily. DHOase family. Class I DHOase subfamily. It depends on Zn(2+) as a cofactor.

The enzyme catalyses (S)-dihydroorotate + H2O = N-carbamoyl-L-aspartate + H(+). It participates in pyrimidine metabolism; UMP biosynthesis via de novo pathway; (S)-dihydroorotate from bicarbonate: step 3/3. Its function is as follows. Catalyzes the reversible cyclization of carbamoyl aspartate to dihydroorotate. The protein is Dihydroorotase of Bacillus cereus (strain ATCC 14579 / DSM 31 / CCUG 7414 / JCM 2152 / NBRC 15305 / NCIMB 9373 / NCTC 2599 / NRRL B-3711).